Consider the following 427-residue polypeptide: Enolase (427 aa).

Gln-163 is a (2R)-2-phosphoglycerate binding site. Glu-205 acts as the Proton donor in catalysis. Mg(2+)-binding residues include Asp-242, Glu-285, and Asp-312. The (2R)-2-phosphoglycerate site is built by Lys-337, Arg-366, Ser-367, and Lys-388. Lys-337 functions as the Proton acceptor in the catalytic mechanism.

The protein belongs to the enolase family. Requires Mg(2+) as cofactor.

The protein localises to the cytoplasm. It localises to the secreted. Its subcellular location is the cell surface. It catalyses the reaction (2R)-2-phosphoglycerate = phosphoenolpyruvate + H2O. It functions in the pathway carbohydrate degradation; glycolysis; pyruvate from D-glyceraldehyde 3-phosphate: step 4/5. Catalyzes the reversible conversion of 2-phosphoglycerate (2-PG) into phosphoenolpyruvate (PEP). It is essential for the degradation of carbohydrates via glycolysis. The chain is Enolase from Azorhizobium caulinodans (strain ATCC 43989 / DSM 5975 / JCM 20966 / LMG 6465 / NBRC 14845 / NCIMB 13405 / ORS 571).